The sequence spans 485 residues: Aspartyl/glutamyl-tRNA(Asn/Gln) amidotransferase subunit B (485 aa).

The protein belongs to the GatB/GatE family. GatB subfamily. As to quaternary structure, heterotrimer of A, B and C subunits.

It catalyses the reaction L-glutamyl-tRNA(Gln) + L-glutamine + ATP + H2O = L-glutaminyl-tRNA(Gln) + L-glutamate + ADP + phosphate + H(+). It carries out the reaction L-aspartyl-tRNA(Asn) + L-glutamine + ATP + H2O = L-asparaginyl-tRNA(Asn) + L-glutamate + ADP + phosphate + 2 H(+). Its function is as follows. Allows the formation of correctly charged Asn-tRNA(Asn) or Gln-tRNA(Gln) through the transamidation of misacylated Asp-tRNA(Asn) or Glu-tRNA(Gln) in organisms which lack either or both of asparaginyl-tRNA or glutaminyl-tRNA synthetases. The reaction takes place in the presence of glutamine and ATP through an activated phospho-Asp-tRNA(Asn) or phospho-Glu-tRNA(Gln). The chain is Aspartyl/glutamyl-tRNA(Asn/Gln) amidotransferase subunit B from Borrelia turicatae (strain 91E135).